A 686-amino-acid polypeptide reads, in one-letter code: Band 4.1-like protein 4A (686 aa).

Positions F11–E299 constitute an FERM domain. S304 carries the post-translational modification Phosphoserine. A disordered region spans residues R331 to T686. A compositionally biased stretch (polar residues) spans A357–N376. 3 positions are modified to phosphoserine: S389, S393, and S402. Residues G418–S428 show a composition bias toward polar residues. Over residues R479–E489 the composition is skewed to low complexity. Basic and acidic residues-rich tracts occupy residues V518–Q527 and Q547–V561. Positions I588–R601 are enriched in basic residues. A compositionally biased stretch (basic and acidic residues) spans G648–P658. Positions T673 to T686 are enriched in polar residues.

As to expression, expressed in many tissues. High levels of expression in brain, liver, thymus and peripheral blood leukocytes and low levels of expression in heart, kidney, testis and colon.

The protein localises to the cytoplasm. Its subcellular location is the cytoskeleton. The polypeptide is Band 4.1-like protein 4A (Homo sapiens (Human)).